The sequence spans 61 residues: Large ribosomal subunit protein uL30 (61 aa).

It belongs to the universal ribosomal protein uL30 family. Part of the 50S ribosomal subunit.

This chain is Large ribosomal subunit protein uL30, found in Mycolicibacterium gilvum (strain PYR-GCK) (Mycobacterium gilvum (strain PYR-GCK)).